A 60-amino-acid chain; its full sequence is Large ribosomal subunit protein bL33 (60 aa).

This sequence belongs to the bacterial ribosomal protein bL33 family.

This is Large ribosomal subunit protein bL33 from Chlorobium luteolum (strain DSM 273 / BCRC 81028 / 2530) (Pelodictyon luteolum).